We begin with the raw amino-acid sequence, 3413 residues long: Protein pecanex (3413 aa).

A run of 2 helical transmembrane segments spans residues 33-53 (VVHL…YLYF) and 57-77 (WLTW…VKLA). Asn-164 is a glycosylation site (N-linked (GlcNAc...) asparagine). Over residues 182-195 (GSQQDQQSLAGSAS) the composition is skewed to low complexity. 2 disordered regions span residues 182–213 (GSQQ…STSA) and 235–314 (GSSA…ENKL). Residues 196–213 (VSKSIRSTGPGGNSSTSA) are compositionally biased toward polar residues. The N-linked (GlcNAc...) asparagine glycan is linked to Asn-208. Over residues 302 to 312 (AAAAANSNAEN) the composition is skewed to low complexity. Residue Asn-317 is glycosylated (N-linked (GlcNAc...) asparagine). Disordered stretches follow at residues 327–363 (PSFL…GDAP), 379–403 (LVNP…RLKH), 540–609 (PGTG…GTGG), and 625–651 (PSVS…NPLP). A compositionally biased stretch (polar residues) spans 330 to 354 (LHSQPTNKARGQTNPRQHFITSAPS). Residues 392 to 402 (RSSETHDERLK) are compositionally biased toward basic and acidic residues. Residues 541–559 (GTGGSVTGGGGAAGGGGSA) show a composition bias toward gly residues. Residues Asn-569 and Asn-581 are each glycosylated (N-linked (GlcNAc...) asparagine). The span at 569–582 (NATSYKHGSSQSNK) shows a compositional bias: polar residues. The span at 599-609 (GTSGGAGGTGG) shows a compositional bias: gly residues. Residues 625–634 (PSVSNLSPHP) show a composition bias toward polar residues. An N-linked (GlcNAc...) asparagine glycan is attached at Asn-685. The segment covering 720 to 730 (EKTAHEEHGDD) has biased composition (basic and acidic residues). Disordered stretches follow at residues 720-745 (EKTA…DDEV), 816-873 (HHHS…NRQP), 886-921 (RQEL…DCEQ), and 1002-1021 (KQTK…HSIS). A compositionally biased stretch (basic residues) spans 816–826 (HHHSHLHHHKA). The span at 828–846 (SVEGAGPSGGSVAVGVSAG) shows a compositional bias: low complexity. The span at 847–856 (NDDEDEETED) shows a compositional bias: acidic residues. Asn-857 carries an N-linked (GlcNAc...) asparagine glycan. A compositionally biased stretch (low complexity) spans 1008-1021 (SRNSSSSNSTHSIS). Residues Asn-1010, Asn-1015, Asn-1069, and Asn-1199 are each glycosylated (N-linked (GlcNAc...) asparagine). 2 consecutive transmembrane segments (helical) span residues 1315-1335 (MHVL…AAIL) and 1343-1363 (LCAL…VKSV). An N-linked (GlcNAc...) asparagine glycan is attached at Asn-1375. Helical transmembrane passes span 1376-1396 (KTVA…LLLL), 1423-1443 (VVAL…IIFS), 1474-1494 (LLGS…LYGP), and 1504-1524 (GTQY…GYHL). A glycan (N-linked (GlcNAc...) asparagine) is linked at Asn-1572. Disordered stretches follow at residues 1577–1675 (QLTT…TGEP), 1722–1744 (DKIS…GAGT), and 1760–1813 (AEAE…LPDP). Composition is skewed to basic and acidic residues over residues 1587 to 1598 (RQTDVKTEHEQI) and 1607 to 1620 (TVNE…HGAD). The span at 1639 to 1666 (KTSSLGSSQQTLGKTISSSKRAITASSS) shows a compositional bias: low complexity. Residues 1725 to 1738 (SSSSATNPGDMSTL) show a composition bias toward polar residues. Tandem repeats lie at residues 1776 to 1777 (GT), 1778 to 1779 (GT), 1780 to 1781 (GT), 1782 to 1783 (GT), and 1784 to 1785 (GT). A 5 X 2 AA tandem repeats of G-T region spans residues 1776 to 1785 (GTGTGTGTGT). N-linked (GlcNAc...) asparagine glycosylation is found at Asn-1791 and Asn-1804. Low complexity predominate over residues 1799 to 1808 (GNTNSNGTGN). Helical transmembrane passes span 1830 to 1850 (LVVM…TVFT), 1856 to 1876 (LNVV…YIVP), 1914 to 1934 (LYIY…AISS), 1940 to 1960 (QLIV…ICAL), and 1976 to 1996 (IIIF…ETFI). The segment at 2344–2463 (SMGGAPPAQA…HSFANISRQT (120 aa)) is disordered. Low complexity predominate over residues 2346–2370 (GGAPPAQAPAAAGGASSAPATAGVA). N-linked (GlcNAc...) asparagine glycans are attached at residues Asn-2380 and Asn-2387. The segment covering 2389–2411 (SAHGGQAGPSSGQSKSQSQQQLR) has biased composition (low complexity). Gly residues predominate over residues 2437–2447 (GTGGVTGGGGD). The span at 2449-2463 (QLSSSHSFANISRQT) shows a compositional bias: polar residues. Residues Asn-2458, Asn-2619, and Asn-2717 are each glycosylated (N-linked (GlcNAc...) asparagine). 2 disordered regions span residues 2908–2997 (LNRE…SSGS) and 3198–3242 (ESST…GDDG). The segment covering 2940–2956 (RRPEVGSSRGRDHERRA) has biased composition (basic and acidic residues). Asn-3246 is a glycosylation site (N-linked (GlcNAc...) asparagine). Residues 3295–3413 (AEESKEKGTA…NGESEAGTTV (119 aa)) form a disordered region. A compositionally biased stretch (acidic residues) spans 3310–3323 (EGEEGVGEMEIEPE). Residues 3364–3377 (TSSTSSAKSTSSPS) are compositionally biased toward low complexity. Residues 3380–3406 (QEEEDAVDPEETPELASEESPSDENGE) show a composition bias toward acidic residues.

It belongs to the pecanex family.

It localises to the membrane. In terms of biological role, involved in neurogenesis. This chain is Protein pecanex (pcx), found in Drosophila melanogaster (Fruit fly).